The primary structure comprises 61 residues: Large ribosomal subunit protein bL32 (61 aa).

Residues methionine 1–arginine 16 are compositionally biased toward basic residues. A disordered region spans residues methionine 1–serine 61. A compositionally biased stretch (basic and acidic residues) spans tyrosine 27–leucine 44.

The protein belongs to the bacterial ribosomal protein bL32 family.

In Nitrobacter winogradskyi (strain ATCC 25391 / DSM 10237 / CIP 104748 / NCIMB 11846 / Nb-255), this protein is Large ribosomal subunit protein bL32.